The following is a 238-amino-acid chain: Ribonuclease HII (238 aa).

Residues 12-197 (GIVAGVDEAG…VLELLTDDLL (186 aa)) form the RNase H type-2 domain. A divalent metal cation is bound by residues aspartate 18, glutamate 19, and aspartate 107.

The protein belongs to the RNase HII family. Mn(2+) serves as cofactor. It depends on Mg(2+) as a cofactor.

It is found in the cytoplasm. The enzyme catalyses Endonucleolytic cleavage to 5'-phosphomonoester.. Its function is as follows. Endonuclease that specifically degrades the RNA of RNA-DNA hybrids. The protein is Ribonuclease HII (rnhB) of Thermotoga maritima (strain ATCC 43589 / DSM 3109 / JCM 10099 / NBRC 100826 / MSB8).